Consider the following 370-residue polypeptide: Apolipoprotein A-V (370 aa).

The signal sequence occupies residues 1-21; the sequence is MASMIALLTWALALLPALASA. A Phosphoserine modification is found at Ser-59.

It belongs to the apolipoprotein A1/A4/E family. As to quaternary structure, interacts with GPIHBP1. Interacts with SORL1; this interaction leads to APOA5 internalization and sorting either to lysosomes and degradation, or to the trans-Golgi network.

Its subcellular location is the secreted. The protein resides in the early endosome. It is found in the late endosome. The protein localises to the golgi apparatus. It localises to the trans-Golgi network. Minor apolipoprotein mainly associated with HDL and to a lesser extent with VLDL. May also be associated with chylomicrons. Important determinant of plasma triglyceride (TG) levels by both being a potent stimulator of apo-CII lipoprotein lipase (LPL) TG hydrolysis and an inhibitor of the hepatic VLDL-TG production rate (without affecting the VLDL-apoB production rate). Activates poorly lecithin:cholesterol acyltransferase (LCAT) and does not enhance efflux of cholesterol from macrophages. Binds heparin. The sequence is that of Apolipoprotein A-V (APOA5) from Acinonyx jubatus (Cheetah).